The following is a 792-amino-acid chain: MNGEQSANGARTLPDDAVVVVPVSNVIFPGVVFPIVLDRPSAVAAAQQALREQHPLVLVLQQDVQAPDPGPQSLHRMGTLANVLRYVTGPDGAPHVACQGVERFEIDEWVEGFPFLVARGRRIPEPEAEGAAIEARFLHLRSQALEALQLLPQSPPGELVAAVEGASSPAALADLVAAYLDLQPPEKQQILETIDLEARLDKVSAFLAQRLEVLRLTSEIAQRTRQSLGERQRETLLREQMAAIQRELGEGEREELVELEAAIENAGMPEEVVQQARKELRRLARTPEAAAEYGMVRTYLEWLVELPWGVPEAAPIDLAEARRILDEDHFGLEKIKQRIIEHLAVRRLAPEGKAPILCFVGPPGVGKTSLGQSIARAMHRPFVRVSLGGVHDESEIRGHRRTYVGALPGNIIQAIRKAGRRDCVMMLDEIDKMSAGIHGDPSAALLEVLDPEQNVAFRDNYLAVPFDLSRVVFIATANMLDTIPGPLRDRMEVIQLSGYTAGEKRQIAERYLVRRQLEANGLTAEQVQIEPAALETLIARYTREAGVRSLEREIGRLLRHVAVRFAEGHTEPVRIGPTNLEPILGPPRVENEVAMRTSVPGVATGLAWTPVGGEILFIEATRTPGDGRLILTGQLGEVMRESAQTALSLVKSRAEALGVTPSLFKESDIHIHVPAGATPKDGPSAGVAMTMALISLLTDRTVRSDTAMTGEISLRGLVLPVGGIKEKVVAAATAGVRRVLLPARNRADERDIPEETRQTLELIWLERIEDAIEAGLDPRRGDVRQTQVRAAS.

Residues 16–211 (DAVVVVPVSN…KVSAFLAQRL (196 aa)) enclose the Lon N-terminal domain. 361–368 (GPPGVGKT) provides a ligand contact to ATP. A Lon proteolytic domain is found at 597–778 (TSVPGVATGL…EDAIEAGLDP (182 aa)). Active-site residues include Ser684 and Lys727.

Belongs to the peptidase S16 family. As to quaternary structure, homohexamer. Organized in a ring with a central cavity.

It is found in the cytoplasm. The enzyme catalyses Hydrolysis of proteins in presence of ATP.. ATP-dependent serine protease that mediates the selective degradation of mutant and abnormal proteins as well as certain short-lived regulatory proteins. Required for cellular homeostasis and for survival from DNA damage and developmental changes induced by stress. Degrades polypeptides processively to yield small peptide fragments that are 5 to 10 amino acids long. Binds to DNA in a double-stranded, site-specific manner. The polypeptide is Lon protease (Phenylobacterium zucineum (strain HLK1)).